Reading from the N-terminus, the 611-residue chain is Depudecin biosynthesis cluster-specific transcription activator DEP6 (611 aa).

The zn(2)-C6 fungal-type DNA-binding region spans 17–44; it reads CEICRQRKVRCDRALPRCRRCERLNQAC. The segment at 76–125 is disordered; that stretch reads DAPRGPASSMSSQSRSDSAAPAASRVPSVSASVPNSAATNPMDMVGTRSS. Over residues 78-113 the composition is skewed to low complexity; sequence PRGPASSMSSQSRSDSAAPAASRVPSVSASVPNSAA.

Its subcellular location is the nucleus. Transcription factor that positively regulates the expression of the gene cluster that mediates the biosynthesis of depudecin, a highly oxidized eleven-carbon linear polyketide that acts as a histone deacetylase (HDAC) inhibitor and makes a small contribution to pathogenesis. The protein is Depudecin biosynthesis cluster-specific transcription activator DEP6 of Fusarium langsethiae.